A 347-amino-acid chain; its full sequence is NADH-ubiquinone oxidoreductase chain 2 (347 aa).

10 helical membrane-spanning segments follow: residues 3–23 (PPIL…VMLS), 25–45 (HWLL…PILM), 66–86 (ASML…QWVI), 111–131 (FHFW…MILL), 149–169 (INTN…GWGG), 178–198 (IMAY…TYNP), 201–221 (MVLN…LFML), 237–257 (FPLI…LPPL), 274–294 (NMII…YFYL), and 325–345 (LLPP…MLSV).

Belongs to the complex I subunit 2 family. In terms of assembly, core subunit of respiratory chain NADH dehydrogenase (Complex I) which is composed of 45 different subunits. Interacts with TMEM242.

It localises to the mitochondrion inner membrane. The catalysed reaction is a ubiquinone + NADH + 5 H(+)(in) = a ubiquinol + NAD(+) + 4 H(+)(out). In terms of biological role, core subunit of the mitochondrial membrane respiratory chain NADH dehydrogenase (Complex I) which catalyzes electron transfer from NADH through the respiratory chain, using ubiquinone as an electron acceptor. Essential for the catalytic activity and assembly of complex I. The sequence is that of NADH-ubiquinone oxidoreductase chain 2 from Canis lupus familiaris (Dog).